Here is a 354-residue protein sequence, read N- to C-terminus: Diaminopimelate epimerase, chloroplastic (354 aa).

The transit peptide at 1 to 44 (MSSATAAATATIAAAAAKLAATPAPAPSRRRLTLRGNPTARRCV) directs the protein to the chloroplast. Active-site residues include cysteine 142 and cysteine 297.

Belongs to the diaminopimelate epimerase family.

Its subcellular location is the plastid. The protein resides in the chloroplast. The catalysed reaction is (2S,6S)-2,6-diaminopimelate = meso-2,6-diaminopimelate. It functions in the pathway amino-acid biosynthesis; L-lysine biosynthesis via DAP pathway; DL-2,6-diaminopimelate from LL-2,6-diaminopimelate: step 1/1. This is Diaminopimelate epimerase, chloroplastic (DAPF) from Oryza sativa subsp. japonica (Rice).